The following is a 91-amino-acid chain: Small ribosomal subunit protein bS20 (91 aa).

The tract at residues 1 to 28 is disordered; it reads MPNIKSAIKRTKTIEKRRAHRASQKSDL. Positions 7–23 are enriched in basic residues; sequence AIKRTKTIEKRRAHRAS.

The protein belongs to the bacterial ribosomal protein bS20 family.

In terms of biological role, binds directly to 16S ribosomal RNA. The polypeptide is Small ribosomal subunit protein bS20 (Brevibacillus brevis (strain 47 / JCM 6285 / NBRC 100599)).